The sequence spans 960 residues: Lon protease homolog, mitochondrial (960 aa).

The transit peptide at 1-56 (MYRAGALVLRSATLRRTRFLAAHQNFATISSQRSSVLLAKSLESSIGGAGNQKKFY) directs the protein to the mitochondrion. A Lon N-terminal domain is found at 92 to 352 (VPILAINRYP…IALLLIQKEK (261 aa)). The tract at residues 195 to 250 (PKTDTPLNGRRARGKRAGLPPTPPPTPPLSTPTSAPEASATSPEEKEEKKDPERKG) is disordered. Positions 214-224 (PPTPPPTPPLS) are enriched in pro residues. The segment covering 225-236 (TPTSAPEASATS) has biased composition (low complexity). Residues 237-250 (PEEKEEKKDPERKG) show a composition bias toward basic and acidic residues. An ATP-binding site is contributed by 505–512 (GPPGVGKT). The interval 712-748 (EQQPEDEQPAATTAISENSDAEPVSTPSDPPTFTPEK) is disordered. Positions 773–960 (VTPPGVIMGL…YDELYEHLFQ (188 aa)) constitute a Lon proteolytic domain. Residues serine 867 and lysine 910 contribute to the active site.

It belongs to the peptidase S16 family. In terms of assembly, homohexamer or homoheptamer. Organized in a ring with a central cavity.

Its subcellular location is the mitochondrion matrix. It catalyses the reaction Hydrolysis of proteins in presence of ATP.. ATP-dependent serine protease that mediates the selective degradation of misfolded, unassembled or oxidatively damaged polypeptides as well as certain short-lived regulatory proteins in the mitochondrial matrix. May also have a chaperone function in the assembly of inner membrane protein complexes. Participates in the regulation of mitochondrial gene expression and in the maintenance of the integrity of the mitochondrial genome. Binds to mitochondrial DNA in a site-specific manner. This Caenorhabditis briggsae protein is Lon protease homolog, mitochondrial.